A 729-amino-acid chain; its full sequence is Leucine-rich repeat flightless-interacting protein 1 (729 aa).

Thr2 bears the N-acetylthreonine mark. Ser16 carries the post-translational modification Phosphoserine. Residues 40-65 are compositionally biased toward basic and acidic residues; that stretch reads IRMKELERQQKEVEERPDKDFAEKGS. The tract at residues 40 to 98 is disordered; it reads IRMKELERQQKEVEERPDKDFAEKGSRNMPSLSAATLASLGGTSSRRGSGDTSISMDTE. The segment covering 78–94 has biased composition (low complexity); that stretch reads SLGGTSSRRGSGDTSIS. Phosphoserine is present on residues Ser83, Ser84, Ser88, Asp90, Ser92, and Thr97. A coiled-coil region spans residues 94 to 194; it reads SMDTEASIRE…LRQREEMLEK (101 aa). A Glycyl lysine isopeptide (Lys-Gly) (interchain with G-Cter in SUMO1) cross-link involves residue Lys249. The interval 253-729 is disordered; the sequence is VEKVGQRETL…SKSKEDCTMS (477 aa). A compositionally biased stretch (polar residues) spans 260 to 272; it reads ETLQNSEQEQPKP. The span at 277-297 shows a compositional bias: basic and acidic residues; the sequence is DCVDRGVSHPGEKAENQRPAE. Residue Ser302 is modified to Phosphoserine. The span at 313 to 326 shows a compositional bias: polar residues; it reads QQVQSQDQENTSDL. The segment covering 327–343 has biased composition (basic and acidic residues); that stretch reads KNSEQIESHKVTNKSDS. The segment covering 344–354 has biased composition (polar residues); that stretch reads RASNSPEQSSC. Ser346 and Ser348 each carry phosphoserine. Composition is skewed to basic and acidic residues over residues 435–445 and 482–494; these read KGTENHGESCL and KADD…EKPI. The interval 465–567 is DNA-binding; sequence EEAIVQIPQA…KNKKKKAATP (103 aa). Positions 506 to 523 are enriched in polar residues; it reads INQSGHQDTTGPGSTDAQ. Ser538 and Ser547 each carry phosphoserine. Residues 550-564 show a composition bias toward basic residues; the sequence is KKTKNKKKKNKKKKA. The span at 608–618 shows a compositional bias: basic and acidic residues; sequence QKIRAGSREPV. Phosphoserine occurs at positions 614 and 670. Polar residues-rich tracts occupy residues 667–684 and 693–710; these read CDTS…SQHG and LDNS…SESG. Residues 713-729 show a composition bias toward basic and acidic residues; the sequence is AREEVGNSKSKEDCTMS.

This sequence belongs to the LRRFIP family. As to quaternary structure, homodimer. May also form higher oligomers. Interacts with FLII. Interacts with MYD88. Competes with FLII for MyD88-binding, even in the absence of LPS. As to expression, ubiquitously expressed.

It localises to the nucleus. It is found in the cytoplasm. Transcriptional repressor which preferentially binds to the GC-rich consensus sequence (5'-AGCCCCCGGCG-3') and may regulate expression of TNF, EGFR and PDGFA. May control smooth muscle cells proliferation following artery injury through PDGFA repression. May also bind double-stranded RNA. Positively regulates Toll-like receptor (TLR) signaling in response to agonist probably by competing with the negative FLII regulator for MYD88-binding. The chain is Leucine-rich repeat flightless-interacting protein 1 (Lrrfip1) from Mus musculus (Mouse).